Consider the following 456-residue polypeptide: Histidine--tRNA ligase (456 aa).

Belongs to the class-II aminoacyl-tRNA synthetase family. As to quaternary structure, homodimer.

The protein localises to the cytoplasm. The catalysed reaction is tRNA(His) + L-histidine + ATP = L-histidyl-tRNA(His) + AMP + diphosphate + H(+). The polypeptide is Histidine--tRNA ligase (Cupriavidus taiwanensis (strain DSM 17343 / BCRC 17206 / CCUG 44338 / CIP 107171 / LMG 19424 / R1) (Ralstonia taiwanensis (strain LMG 19424))).